A 312-amino-acid chain; its full sequence is Olfactory receptor 4F15 (312 aa).

Over 1 to 25 (MNGMNHSVVSEFVFMGLTNSREIQL) the chain is Extracellular. The N-linked (GlcNAc...) asparagine glycan is linked to Asn-5. A helical transmembrane segment spans residues 26–49 (LLFVFSLLFYFASMMGNLVIVFTV). Over 50–57 (TMDAHLHS) the chain is Cytoplasmic. The chain crosses the membrane as a helical span at residues 58-79 (PMYFLLANLSIIDMAFCSITAP). Topologically, residues 80–100 (KMICDIFKKHKAISFRGCITQ) are extracellular. Cys-97 and Cys-189 are disulfide-bonded. Residues 101–120 (IFFSHALGGTEMVLLIAMAF) traverse the membrane as a helical segment. Topologically, residues 121-139 (DRYMAICKPLHYLTIMSPR) are cytoplasmic. A helical membrane pass occupies residues 140-158 (MCLYFLATSSIIGLIHSLV). Over 159-195 (QLVFVVDLPFCGPNIFDSFYCDLPRLLRLACTNTQEL) the chain is Extracellular. Residues 196–219 (EFMVTVNSGLISVGSFVLLVISYI) traverse the membrane as a helical segment. Over 220–235 (FILFTVWKHSSGGLAK) the chain is Cytoplasmic. The helical transmembrane segment at 236–258 (ALSTLSAHVTVVILFFGPLMFFY) threads the bilayer. Topologically, residues 259–269 (TWPSPTSHLDK) are extracellular. The chain crosses the membrane as a helical span at residues 270-289 (YLAIFDAFITPFLNPVIYTF). The Cytoplasmic segment spans residues 290-312 (RNKDMKVAMRRLCSRLAHFTKIL).

Belongs to the G-protein coupled receptor 1 family.

It localises to the cell membrane. Odorant receptor. The protein is Olfactory receptor 4F15 (OR4F15) of Homo sapiens (Human).